Consider the following 137-residue polypeptide: MLQPKRTKFRKQHKGRIHGEAKGGFLLNFGGFGLKATEPERVTARQIEAARRAITRHMKRQGRVWIRVFPDVPVTSKPTEVRMGKGKGSVDYWAAKVKPGRIMFEIDGVSETIAREALRLGAMKLPVMTRIVVREDW.

It belongs to the universal ribosomal protein uL16 family. As to quaternary structure, part of the 50S ribosomal subunit.

Functionally, binds 23S rRNA and is also seen to make contacts with the A and possibly P site tRNAs. This is Large ribosomal subunit protein uL16 from Cereibacter sphaeroides (strain ATCC 17029 / ATH 2.4.9) (Rhodobacter sphaeroides).